The following is an 827-amino-acid chain: DNA gyrase subunit A (827 aa).

The 464-residue stretch at 38–501 (LPDARDGLKP…SYENIDIEDL (464 aa)) folds into the Topo IIA-type catalytic domain. Residue tyrosine 126 is the O-(5'-phospho-DNA)-tyrosine intermediate of the active site. The GyrA-box motif lies at 528–534 (QNRGGKG).

This sequence belongs to the type II topoisomerase GyrA/ParC subunit family. As to quaternary structure, heterotetramer, composed of two GyrA and two GyrB chains. In the heterotetramer, GyrA contains the active site tyrosine that forms a transient covalent intermediate with DNA, while GyrB binds cofactors and catalyzes ATP hydrolysis.

The protein resides in the cytoplasm. The catalysed reaction is ATP-dependent breakage, passage and rejoining of double-stranded DNA.. Its function is as follows. A type II topoisomerase that negatively supercoils closed circular double-stranded (ds) DNA in an ATP-dependent manner to modulate DNA topology and maintain chromosomes in an underwound state. Negative supercoiling favors strand separation, and DNA replication, transcription, recombination and repair, all of which involve strand separation. Also able to catalyze the interconversion of other topological isomers of dsDNA rings, including catenanes and knotted rings. Type II topoisomerases break and join 2 DNA strands simultaneously in an ATP-dependent manner. The polypeptide is DNA gyrase subunit A (Helicobacter pylori (strain ATCC 700392 / 26695) (Campylobacter pylori)).